The primary structure comprises 355 residues: MGGKTFMLMAGGTGGHIFPALAVADSLRARGHHVIWLGSKDSMEERIVPQYGIRLETLAIKGVRGNGIKRKLMLPVTLYQTVREAQRIIRKHRVECVIGFGGFVTFPGGLAAKLLGVPIVIHEQNAVAGLSNRHLSRWAKRVLYAFPKAFSHEGGLVGNPVRADISNLPVPAERFQGREGRLKILVVGGSLGADVLNKTVPQALALLPDNARPQMYHQSGRGKLGSLQADYDALGVKAECVEFITDMVSAYRDADLVICRAGALTIAELTAAGLGALLVPYPHAVDDHQTANARFMVQAEAGLLLPQTQLTAEKLAEILGGLNREKCLKWAENARTLALPHSADDVAEAAIACAA.

UDP-N-acetyl-alpha-D-glucosamine-binding positions include 13–15 (TGG), N125, R162, S190, I244, and Q289.

It belongs to the glycosyltransferase 28 family. MurG subfamily.

It localises to the cell inner membrane. The catalysed reaction is di-trans,octa-cis-undecaprenyl diphospho-N-acetyl-alpha-D-muramoyl-L-alanyl-D-glutamyl-meso-2,6-diaminopimeloyl-D-alanyl-D-alanine + UDP-N-acetyl-alpha-D-glucosamine = di-trans,octa-cis-undecaprenyl diphospho-[N-acetyl-alpha-D-glucosaminyl-(1-&gt;4)]-N-acetyl-alpha-D-muramoyl-L-alanyl-D-glutamyl-meso-2,6-diaminopimeloyl-D-alanyl-D-alanine + UDP + H(+). Its pathway is cell wall biogenesis; peptidoglycan biosynthesis. Cell wall formation. Catalyzes the transfer of a GlcNAc subunit on undecaprenyl-pyrophosphoryl-MurNAc-pentapeptide (lipid intermediate I) to form undecaprenyl-pyrophosphoryl-MurNAc-(pentapeptide)GlcNAc (lipid intermediate II). The sequence is that of UDP-N-acetylglucosamine--N-acetylmuramyl-(pentapeptide) pyrophosphoryl-undecaprenol N-acetylglucosamine transferase from Neisseria meningitidis serogroup B (strain ATCC BAA-335 / MC58).